A 658-amino-acid chain; its full sequence is UvrABC system protein B (658 aa).

Residues 26 to 413 (EGINSGKKKQ…SPEVIEQIIR (388 aa)) form the Helicase ATP-binding domain. An ATP-binding site is contributed by 39-46 (GATGTGKT). The short motif at 92–115 (YYDYYQPEAYVPQTDTFIEKDAQI) is the Beta-hairpin element. The Helicase C-terminal domain maps to 430 to 596 (QIDDLLGEIQ…TIQKGVRDVI (167 aa)). One can recognise a UVR domain in the interval 622–657 (EKTIAKMEAEMKEAAKALDFERAAELRDLLLELKAE).

Belongs to the UvrB family. Forms a heterotetramer with UvrA during the search for lesions. Interacts with UvrC in an incision complex.

Its subcellular location is the cytoplasm. In terms of biological role, the UvrABC repair system catalyzes the recognition and processing of DNA lesions. A damage recognition complex composed of 2 UvrA and 2 UvrB subunits scans DNA for abnormalities. Upon binding of the UvrA(2)B(2) complex to a putative damaged site, the DNA wraps around one UvrB monomer. DNA wrap is dependent on ATP binding by UvrB and probably causes local melting of the DNA helix, facilitating insertion of UvrB beta-hairpin between the DNA strands. Then UvrB probes one DNA strand for the presence of a lesion. If a lesion is found the UvrA subunits dissociate and the UvrB-DNA preincision complex is formed. This complex is subsequently bound by UvrC and the second UvrB is released. If no lesion is found, the DNA wraps around the other UvrB subunit that will check the other stand for damage. In Bacillus cereus (strain ZK / E33L), this protein is UvrABC system protein B.